Reading from the N-terminus, the 185-residue chain is Ribosome-recycling factor (185 aa).

This sequence belongs to the RRF family.

It is found in the cytoplasm. In terms of biological role, responsible for the release of ribosomes from messenger RNA at the termination of protein biosynthesis. May increase the efficiency of translation by recycling ribosomes from one round of translation to another. The polypeptide is Ribosome-recycling factor (Ehrlichia ruminantium (strain Gardel)).